The primary structure comprises 847 residues: Zinc transporter ZIP10 (847 aa).

The first 26 residues, 1-26 (MMRVHTHTRLCFLCVLTLLYHQCSHC), serve as a signal peptide directing secretion. Positions 136–374 (GRHSHSAGHP…RREVPGSPAH (239 aa)) are disordered. Over residues 162 to 171 (HHENEEHTLA) the composition is skewed to basic and acidic residues. Residues 179-188 (TLGTGATPPS) are compositionally biased toward polar residues. Positions 190–269 (SEEHDHDHEH…QEHNDLSDQN (80 aa)) are enriched in basic and acidic residues. Basic residues-rich tracts occupy residues 270-285 (HHHHDHHHHKHPHPHL) and 314-330 (TRRHRRPSKVKAHRGRN). An N-linked (GlcNAc...) asparagine glycan is attached at asparagine 385. The next 3 membrane-spanning stretches (helical) occupy residues 447 to 467 (FVSITIISLLSLLGVVLVPIL), 474 to 494 (FLLTFLVALAVGTLSGDALLH), and 529 to 549 (GLTALAGIYLLFIIEHCIGMF). The segment at 613 to 676 (ELQPLDSPSK…HSHHGHCHSD (64 aa)) is disordered. The span at 629-646 (DSDHPYEAPVKTEEDNVP) shows a compositional bias: basic and acidic residues. A compositionally biased stretch (basic residues) spans 648 to 672 (AKSKKHGHGHGHGHGHGHGHSHHGH). 4 consecutive transmembrane segments (helical) span residues 705–725 (AIGAAFSANITGGISTSVAVF), 750–770 (IVYNLLSALMAYAGMVIGTAV), 779–799 (SWIFAVTAGMFLYVALVDMLP), and 817–837 (FVLQNFGMLTGFGIMLLIAIF).

The protein belongs to the ZIP transporter (TC 2.A.5) family. In terms of processing, undergoes N-terminal ectodomain shedding.

The protein resides in the cell membrane. Its subcellular location is the apical cell membrane. The catalysed reaction is Zn(2+)(in) = Zn(2+)(out). Zinc-influx transporter. When associated with slc39a6, the heterodimer slc39a10/slc39a6 has a functional role in epithelial-mesenchymal transition (EMT) during embryonic development. Slc39a10/slc39a6 heterodimers play also an essentiel role in initiating mitosis by importing zinc into cells to initiate a pathway resulting in the onset of mitosis. When associated with slc39a6, the heterodimer controls Ncam1 phosphorylation and integration into focal adhesion complexes during EMT. The protein is Zinc transporter ZIP10 of Danio rerio (Zebrafish).